The following is a 796-amino-acid chain: Serine/threonine-protein kinase ATG1 (796 aa).

A Protein kinase domain is found at 9–304 (YVVGAEIGRG…FQEFFNDPVI (296 aa)). Residues 15-23 (IGRGSFANV) and K38 each bind ATP. The Proton acceptor role is filled by D155. Residues 360–370 (LEEEDEEEDQD) are compositionally biased toward acidic residues. Disordered stretches follow at residues 360–382 (LEEE…IQHM), 389–408 (LLNK…RREL), and 450–480 (PYTR…KVPI). Residues 389–403 (LLNKTTQKQTEVQSQ) show a composition bias toward polar residues. Residues 453-470 (RRYSSSSRSSSTGSNQRR) are compositionally biased toward low complexity.

The protein belongs to the protein kinase superfamily. Ser/Thr protein kinase family. APG1/unc-51/ULK1 subfamily. As to quaternary structure, homodimer. Forms a ternary complex with ATG13 and ATG17.

It is found in the cytoplasm. The protein localises to the preautophagosomal structure membrane. The catalysed reaction is L-seryl-[protein] + ATP = O-phospho-L-seryl-[protein] + ADP + H(+). The enzyme catalyses L-threonyl-[protein] + ATP = O-phospho-L-threonyl-[protein] + ADP + H(+). Its function is as follows. Serine/threonine protein kinase involved in the cytoplasm to vacuole transport (Cvt) and found to be essential in autophagy, where it is required for the formation of autophagosomes. Involved in the clearance of protein aggregates which cannot be efficiently cleared by the proteasome. Required for selective autophagic degradation of the nucleus (nucleophagy) as well as for mitophagy which contributes to regulate mitochondrial quantity and quality by eliminating the mitochondria to a basal level to fulfill cellular energy requirements and preventing excess ROS production. Also involved in endoplasmic reticulum-specific autophagic process, in selective removal of ER-associated degradation (ERAD) substrates. Plays a key role in ATG9 and ATG23 cycling through the pre-autophagosomal structure and is necessary to promote ATG18 binding to ATG9 through phosphorylation of ATG9. Catalyzes phosphorylation of ATG4, decreasing the interaction between ATG4 and ATG8 and impairing deconjugation of PE-conjugated forms of ATG8. The polypeptide is Serine/threonine-protein kinase ATG1 (Komagataella pastoris (Yeast)).